We begin with the raw amino-acid sequence, 3131 residues long: Intermembrane lipid transfer protein vps1302 (3131 aa).

The Chorein N-terminal domain maps to 2–115 (LEGLLANFLN…VLESKRRQMQ (114 aa)). Positions 774-801 (DGKASDDDDNGDWRPESSESLDSHESEY) are enriched in basic and acidic residues. Residues 774–807 (DGKASDDDDNGDWRPESSESLDSHESEYKLNNTP) are disordered. The SHR-BD domain maps to 2085-2363 (KVMIYPPYVI…NYSWDFPILK (279 aa)).

This sequence belongs to the VPS13 family.

It localises to the golgi apparatus. It is found in the trans-Golgi network. Mediates the transfer of lipids between membranes at organelle contact sites. May play a role in mitochondrial lipid homeostasis, Golgi vesicle transport, reticulophagy, actin cytoskeleton organization and formation of the forespore membrane. This chain is Intermembrane lipid transfer protein vps1302, found in Schizosaccharomyces pombe (strain 972 / ATCC 24843) (Fission yeast).